Reading from the N-terminus, the 196-residue chain is UMP-CMP kinase (196 aa).

13 to 18 contacts ATP; it reads GAGKGT. At Ser-33 the chain carries Phosphoserine. The interval 33–63 is NMP; sequence SAGELLRDERKNPDSQYGELIEKYIKEGKIV. Residue Arg-39 participates in a ribonucleoside 5'-phosphate binding. Lys-43 and Lys-55 each carry N6-acetyllysine. 61 to 63 serves as a coordination point for a ribonucleoside 5'-phosphate; that stretch reads KIV. Residue Lys-73 forms a Glycyl lysine isopeptide (Lys-Gly) (interchain with G-Cter in SUMO2) linkage. 93-96 contacts a ribonucleoside 5'-phosphate; the sequence is GFPR. Position 100 (Asn-100) interacts with CMP. Lys-106 carries the N6-succinyllysine modification. Residues 133-143 form an LID region; it reads ERGKSSGRSDD. Arg-134 contacts ATP. Positions 140 and 151 each coordinate a ribonucleoside 5'-phosphate. An ATP-binding site is contributed by Lys-179. Position 180 is a phosphoserine (Ser-180).

It belongs to the adenylate kinase family. UMP-CMP kinase subfamily. Monomer. Mg(2+) serves as cofactor.

The protein resides in the nucleus. The protein localises to the cytoplasm. The enzyme catalyses CMP + ATP = CDP + ADP. The catalysed reaction is dCMP + ATP = dCDP + ADP. It catalyses the reaction UMP + ATP = UDP + ADP. It carries out the reaction a 2'-deoxyribonucleoside 5'-diphosphate + ATP = a 2'-deoxyribonucleoside 5'-triphosphate + ADP. The enzyme catalyses a ribonucleoside 5'-diphosphate + ATP = a ribonucleoside 5'-triphosphate + ADP. In terms of biological role, catalyzes the phosphorylation of pyrimidine nucleoside monophosphates at the expense of ATP. Plays an important role in de novo pyrimidine nucleotide biosynthesis. Has preference for UMP and CMP as phosphate acceptors. Also displays broad nucleoside diphosphate kinase activity. The chain is UMP-CMP kinase (Cmpk1) from Mus musculus (Mouse).